The following is a 123-amino-acid chain: Large ribosomal subunit protein uL29 (123 aa).

Belongs to the universal ribosomal protein uL29 family.

This is Large ribosomal subunit protein uL29 (RPL35) from Euphorbia esula (Leafy spurge).